The chain runs to 357 residues: tRNA-specific 2-thiouridylase MnmA (357 aa).

Residues 8–15 (GISGGVDS) and isoleucine 34 contribute to the ATP site. Cysteine 96 (nucleophile) is an active-site residue. Residues cysteine 96 and cysteine 192 are joined by a disulfide bond. Glycine 120 contacts ATP. Residues 142–144 (KDQ) form an interaction with tRNA region. Cysteine 192 acts as the Cysteine persulfide intermediate in catalysis. The interval 301-302 (RY) is interaction with tRNA.

The protein belongs to the MnmA/TRMU family.

It localises to the cytoplasm. The enzyme catalyses S-sulfanyl-L-cysteinyl-[protein] + uridine(34) in tRNA + AH2 + ATP = 2-thiouridine(34) in tRNA + L-cysteinyl-[protein] + A + AMP + diphosphate + H(+). Functionally, catalyzes the 2-thiolation of uridine at the wobble position (U34) of tRNA, leading to the formation of s(2)U34. In Chlorobium phaeobacteroides (strain DSM 266 / SMG 266 / 2430), this protein is tRNA-specific 2-thiouridylase MnmA.